Reading from the N-terminus, the 492-residue chain is ATP synthase subunit beta, chloroplastic (492 aa).

An ATP-binding site is contributed by 170–177 (GGAGVGKT).

Belongs to the ATPase alpha/beta chains family. In terms of assembly, F-type ATPases have 2 components, CF(1) - the catalytic core - and CF(0) - the membrane proton channel. CF(1) has five subunits: alpha(3), beta(3), gamma(1), delta(1), epsilon(1). CF(0) has four main subunits: a(1), b(1), b'(1) and c(9-12).

Its subcellular location is the plastid. The protein resides in the chloroplast thylakoid membrane. It catalyses the reaction ATP + H2O + 4 H(+)(in) = ADP + phosphate + 5 H(+)(out). In terms of biological role, produces ATP from ADP in the presence of a proton gradient across the membrane. The catalytic sites are hosted primarily by the beta subunits. This chain is ATP synthase subunit beta, chloroplastic, found in Psilotum nudum (Whisk fern).